A 233-amino-acid polypeptide reads, in one-letter code: Phosphoglycolate phosphatase (233 aa).

Residue aspartate 13 is the Nucleophile of the active site. Mg(2+)-binding residues include aspartate 13, aspartate 15, and aspartate 175.

This sequence belongs to the HAD-like hydrolase superfamily. CbbY/CbbZ/Gph/YieH family. Requires Mg(2+) as cofactor.

The catalysed reaction is 2-phosphoglycolate + H2O = glycolate + phosphate. Its pathway is organic acid metabolism; glycolate biosynthesis; glycolate from 2-phosphoglycolate: step 1/1. Its function is as follows. Specifically catalyzes the dephosphorylation of 2-phosphoglycolate. Is involved in the dissimilation of the intracellular 2-phosphoglycolate formed during the DNA repair of 3'-phosphoglycolate ends, a major class of DNA lesions induced by oxidative stress. This is Phosphoglycolate phosphatase from Agrobacterium fabrum (strain C58 / ATCC 33970) (Agrobacterium tumefaciens (strain C58)).